The chain runs to 141 residues: Acetyltransferase YPN_1354 (141 aa).

The region spanning methionine 1 to tyrosine 141 is the N-acetyltransferase domain.

It belongs to the acetyltransferase family. YpeA subfamily.

This is Acetyltransferase YPN_1354 from Yersinia pestis bv. Antiqua (strain Nepal516).